Consider the following 376-residue polypeptide: tRNA(Met) cytidine acetate ligase (376 aa).

ATP contacts are provided by residues 7–20 (IAEY…HYYQ), Gly102, Asn160, and Arg181.

This sequence belongs to the TmcAL family.

Its subcellular location is the cytoplasm. The catalysed reaction is cytidine(34) in elongator tRNA(Met) + acetate + ATP = N(4)-acetylcytidine(34) in elongator tRNA(Met) + AMP + diphosphate. Catalyzes the formation of N(4)-acetylcytidine (ac(4)C) at the wobble position of elongator tRNA(Met), using acetate and ATP as substrates. First activates an acetate ion to form acetyladenylate (Ac-AMP) and then transfers the acetyl group to tRNA to form ac(4)C34. The chain is tRNA(Met) cytidine acetate ligase from Exiguobacterium sp. (strain ATCC BAA-1283 / AT1b).